Here is a 422-residue protein sequence, read N- to C-terminus: PHAF1 protein T01G9.2 (422 aa).

The protein belongs to the PHAF1 family.

The protein localises to the cytoplasm. Its subcellular location is the preautophagosomal structure. In terms of biological role, may play a regulatory role in autophagic activity. The sequence is that of PHAF1 protein T01G9.2 from Caenorhabditis elegans.